Here is a 414-residue protein sequence, read N- to C-terminus: MSLLDHVDPEISAVIRKELDRQRNTLVLVAAENFTSPAVMEAQGCVMTNKYAEGYPGKRYYRGCAFMDEAENLARDRCKKLFGAEHVNVQPHSGSQANMAAYFATLKPGDTIMGMNLDHGGHLSHGSPVNFSGKLYHVVPYGVSRKTEMLDYSEILDVARECRPQMIVCGASAYPRIIDFKAMREIADEVGALLMADIAHIAGLVAAGVHPSPIPYADIVTTTTHKTLRGPRGGVIMCREELAQAIDRAVFPGIQGGPMMHTIAAKAVAFKEAMTPEFRRYQEQIVRNAAALADRLIENGFDLVSGGTDNHLMLVKLLKEGITGKEADETLESAGIALNKNMIPFDPRTPFVTSGIRIGTPAVTSRGMKENEMREIADLITEVIRDMKNPATIESVRSRVRALCERFPLYPELG.

Residues L117 and 121-123 (GHL) contribute to the (6S)-5,6,7,8-tetrahydrofolate site. K226 carries the N6-(pyridoxal phosphate)lysine modification. (6S)-5,6,7,8-tetrahydrofolate-binding positions include E241 and 349-351 (TPF).

This sequence belongs to the SHMT family. As to quaternary structure, homodimer. Pyridoxal 5'-phosphate is required as a cofactor.

The protein resides in the cytoplasm. The catalysed reaction is (6R)-5,10-methylene-5,6,7,8-tetrahydrofolate + glycine + H2O = (6S)-5,6,7,8-tetrahydrofolate + L-serine. Its pathway is one-carbon metabolism; tetrahydrofolate interconversion. It functions in the pathway amino-acid biosynthesis; glycine biosynthesis; glycine from L-serine: step 1/1. Its function is as follows. Catalyzes the reversible interconversion of serine and glycine with tetrahydrofolate (THF) serving as the one-carbon carrier. Also exhibits THF-independent aldolase activity toward beta-hydroxyamino acids, producing glycine and aldehydes, via a retro-aldol mechanism. In Methanothrix thermoacetophila (strain DSM 6194 / JCM 14653 / NBRC 101360 / PT) (Methanosaeta thermophila), this protein is Serine hydroxymethyltransferase.